The chain runs to 150 residues: Endoribonuclease YbeY (150 aa).

Residues histidine 113, histidine 117, and histidine 123 each coordinate Zn(2+).

This sequence belongs to the endoribonuclease YbeY family. Requires Zn(2+) as cofactor.

Its subcellular location is the cytoplasm. Its function is as follows. Single strand-specific metallo-endoribonuclease involved in late-stage 70S ribosome quality control and in maturation of the 3' terminus of the 16S rRNA. This chain is Endoribonuclease YbeY, found in Malacoplasma penetrans (strain HF-2) (Mycoplasma penetrans).